Consider the following 330-residue polypeptide: Phospholipase C (330 aa).

A signal peptide spans 1–34 (MVKKTKSNSLKKVATLALANLLLVGALTDNSAKA). A disulfide bridge connects residues Cys-155 and Cys-191.

It belongs to the neutral sphingomyelinase family. As to quaternary structure, monomer.

The protein localises to the secreted. It carries out the reaction a 1,2-diacyl-sn-glycero-3-phosphocholine + H2O = phosphocholine + a 1,2-diacyl-sn-glycerol + H(+). Bacterial hemolysins are exotoxins that attack blood cell membranes and cause cell rupture. Beta-hemolysin is a phospholipase C with specific activity toward sphingomyelins. Has a high specificity for sphingomyelin, hydrolyzes lysophosphatidylcholine at a much lower rate, but has no activity towards phosphatidylcholine, phosphatidylethanolamine, or phosphatidylserine. The protein is Phospholipase C (hlb) of Staphylococcus aureus (strain NCTC 8325 / PS 47).